A 145-amino-acid polypeptide reads, in one-letter code: UPF0260 protein VS_0923 (145 aa).

This sequence belongs to the UPF0260 family.

This Vibrio atlanticus (strain LGP32) (Vibrio splendidus (strain Mel32)) protein is UPF0260 protein VS_0923.